The following is a 140-amino-acid chain: Ribosome-binding factor A (140 aa).

The segment covering 1–13 has biased composition (basic residues); that stretch reads MQKKSSSKSHRAT. The tract at residues 1-22 is disordered; it reads MQKKSSSKSHRATRGPSQRQLR.

It belongs to the RbfA family. Monomer. Binds 30S ribosomal subunits, but not 50S ribosomal subunits or 70S ribosomes.

It is found in the cytoplasm. In terms of biological role, one of several proteins that assist in the late maturation steps of the functional core of the 30S ribosomal subunit. Associates with free 30S ribosomal subunits (but not with 30S subunits that are part of 70S ribosomes or polysomes). Required for efficient processing of 16S rRNA. May interact with the 5'-terminal helix region of 16S rRNA. The sequence is that of Ribosome-binding factor A from Parvibaculum lavamentivorans (strain DS-1 / DSM 13023 / NCIMB 13966).